We begin with the raw amino-acid sequence, 950 residues long: General transcription factor II-I repeat domain-containing protein 2 (950 aa).

GTF2I-like repeat units lie at residues 100–194 (QVDS…QPGG) and 324–418 (LSSL…SNVG).

It belongs to the TFII-I family.

It is found in the nucleus. The sequence is that of General transcription factor II-I repeat domain-containing protein 2 (GTF2IRD2) from Bos taurus (Bovine).